Here is a 199-residue protein sequence, read N- to C-terminus: Phosphatidylethanolamine N-methyltransferase (199 aa).

At 2–12 the chain is on the lumenal side; that stretch reads SWLLGYVDPTE. Positions 13 to 33 form an intramembrane region, helical; the sequence is PSFVAAVLTIVFNPLFWNVVA. At 34–45 the chain is on the lumenal side; it reads RWEQRTRKLSRA. The chain crosses the membrane as a helical span at residues 46–66; it reads FGSPYLACYSLGSIILLLNIL. Over 67 to 93 the chain is Cytoplasmic; the sequence is RSHCFTQAMMSQPKMEGLDSHTIYFLG. The helical transmembrane segment at 94 to 114 threads the bilayer; that stretch reads LALLGWGLVFVLSSFYALGFT. 98 to 100 serves as a coordination point for S-adenosyl-L-methionine; it reads GWG. At 115 to 157 the chain is on the lumenal side; the sequence is GTFLGDYFGILKESRVTTFPFSVLDNPMYWGSTANYLGWALMH. The chain crosses the membrane as a helical span at residues 158 to 178; that stretch reads ASPTGLLLTVLVALVYVVALL. Over 179 to 199 the chain is Cytoplasmic; it reads FEEPFTAEIYRRKATRLHKRS. 180–181 contributes to the S-adenosyl-L-methionine binding site; it reads EE.

It belongs to the class VI-like SAM-binding methyltransferase superfamily. PEMT/PEM2 methyltransferase family. In terms of tissue distribution, expressed in liver (at protein level).

Its subcellular location is the endoplasmic reticulum membrane. It is found in the mitochondrion membrane. It carries out the reaction a 1,2-diacyl-sn-glycero-3-phosphoethanolamine + S-adenosyl-L-methionine = a 1,2-diacyl-sn-glycero-3-phospho-N-methylethanolamine + S-adenosyl-L-homocysteine + H(+). The catalysed reaction is a 1,2-diacyl-sn-glycero-3-phospho-N-methylethanolamine + S-adenosyl-L-methionine = a 1,2-diacyl-sn-glycero-3-phospho-N,N-dimethylethanolamine + S-adenosyl-L-homocysteine + H(+). The enzyme catalyses a 1,2-diacyl-sn-glycero-3-phospho-N,N-dimethylethanolamine + S-adenosyl-L-methionine = a 1,2-diacyl-sn-glycero-3-phosphocholine + S-adenosyl-L-homocysteine + H(+). It catalyses the reaction 1,2-di-(9Z-octadecenoyl)-sn-glycero-3-phosphoethanolamine + S-adenosyl-L-methionine = 1,2-di-(9Z-octadecenoyl)-sn-glycero-3-phospho-N-methylethanolamine + S-adenosyl-L-homocysteine + H(+). It carries out the reaction 1,2-di-(9Z-octadecenoyl)-sn-glycero-3-phospho-N-methylethanolamine + S-adenosyl-L-methionine = 1,2-di-(9Z-octadecenoyl)-sn-glycero-3-phospho-N,N-dimethylethanolamine + S-adenosyl-L-homocysteine + H(+). The catalysed reaction is 1,2-di-(9Z-octadecenoyl)-sn-glycero-3-phospho-N,N-dimethylethanolamine + S-adenosyl-L-methionine = 1,2-di-(9Z-octadecenoyl)-sn-glycero-3-phosphocholine + S-adenosyl-L-homocysteine + H(+). The enzyme catalyses 1,2-di-(9Z,12Z-octadecadienoyl)-sn-glycero-3-phosphoethanolamine + S-adenosyl-L-methionine = 1,2-di-(9Z,12Z-octadecadienoyl)-sn-glycero-3-phospho-N-methylethanolamine + S-adenosyl-L-homocysteine + H(+). It catalyses the reaction 1,2-di-(9Z,12Z-octadecadienoyl)-sn-glycero-3-phospho-N-methylethanolamine + S-adenosyl-L-methionine = 1,2-di-(9Z,12Z-octadecadienoyl)-sn-glycero-3-phospho-N,N-dimethylethanolamine + S-adenosyl-L-homocysteine + H(+). It carries out the reaction 1,2-di-(9Z,12Z-octadecadienoyl)-sn-glycero-3-phospho-N,N-dimethylethanolamine + S-adenosyl-L-methionine = 1,2-di-(9Z,12Z-octadecadienoyl)-sn-glycero-3-phosphocholine + S-adenosyl-L-homocysteine + H(+). The catalysed reaction is 1,2-di-(9Z,12Z,15Z-octadecatrienoyl)-sn-glycero-3-phosphoethanolamine + S-adenosyl-L-methionine = 1,2-di-(9Z,12Z,15Z-octadecatrienoyl)-sn-glycero-3-phospho-N-methylethanolamine + S-adenosyl-L-homocysteine + H(+). The enzyme catalyses 1,2-di-(9Z,12Z,15Z-octadecatrienoyl)-sn-glycero-3-phospho-N-methylethanolamine + S-adenosyl-L-methionine = 1,2-di-(9Z,12Z,15Z-octadecatrienoyl)-sn-glycero-3-phospho-N,N-dimethylethanolamine + S-adenosyl-L-homocysteine + H(+). It catalyses the reaction 1,2-di-(9Z,12Z,15Z-octadecatrienoyl)-sn-glycero-3-phospho-N,N-dimethylethanolamine + S-adenosyl-L-methionine = 1,2-di-(9Z,12Z,15Z-octadecatrienoyl)-sn-glycero-3-phosphocholine + S-adenosyl-L-homocysteine + H(+). It carries out the reaction 1-hexadecanoyl-2-(4Z,7Z,10Z,13Z,16Z,19Z-docosahexaenoyl)-sn-glycero-3-phosphoethanolamine + S-adenosyl-L-methionine = 1-hexadecanoyl-2-(4Z,7Z,10Z,13Z,16Z,19Z-docosahexaenoyl)-sn-glycero-3-phospho-N-methylethanolamine + S-adenosyl-L-homocysteine + H(+). The catalysed reaction is 1-hexadecanoyl-2-(4Z,7Z,10Z,13Z,16Z,19Z-docosahexaenoyl)-sn-glycero-3-phospho-N-methylethanolamine + S-adenosyl-L-methionine = 1-hexadecanoyl-2-(4Z,7Z,10Z,13Z,16Z,19Z-docosahexaenoyl)-sn-glycero-3-phospho-N,N-dimethylethanolamine + S-adenosyl-L-homocysteine + H(+). The enzyme catalyses 1-hexadecanoyl-2-(4Z,7Z,10Z,13Z,16Z,19Z-docosahexaenoyl)-sn-glycero-3-phospho-N,N-dimethylethanolamine + S-adenosyl-L-methionine = 1-hexadecanoyl-2-(4Z,7Z,10Z,13Z,16Z,19Z-docosahexaenoyl)-sn-glycero-3-phosphocholine + S-adenosyl-L-homocysteine + H(+). It functions in the pathway phospholipid metabolism; phosphatidylcholine biosynthesis. In terms of biological role, catalyzes the three sequential steps of the methylation pathway for the biosynthesis of phosphatidylcholine, a critical and essential component for membrane structure. Uses S-adenosylmethionine (S-adenosyl-L-methionine, SAM or AdoMet) as the methyl group donor for the methylation of phosphatidylethanolamine (1,2-diacyl-sn-glycero-3-phosphoethanolamine, PE) to phosphatidylmonomethylethanolamine (1,2-diacyl-sn-glycero-3-phospho-N-methylethanolamine, PMME), PMME to phosphatidyldimethylethanolamine (1,2-diacyl-sn-glycero-3-phospho-N,N-dimethylethanolamine, PDME), and PDME to phosphatidylcholine (1,2-diacyl-sn-glycero-3-phosphocholine, PC), producing S-adenosyl-L-homocysteine in each step. This chain is Phosphatidylethanolamine N-methyltransferase, found in Rattus norvegicus (Rat).